We begin with the raw amino-acid sequence, 525 residues long: GMP synthase [glutamine-hydrolyzing] (525 aa).

The Glutamine amidotransferase type-1 domain occupies 9 to 207; it reads RILILDFGSQ…VLDICACEAL (199 aa). The active-site Nucleophile is the Cys-86. Residues His-181 and Glu-183 contribute to the active site. The region spanning 208–400 is the GMPS ATP-PPase domain; the sequence is WTPATIIEDA…LGLPYDMLYR (193 aa). An ATP-binding site is contributed by 235 to 241; that stretch reads SGGVDSS.

As to quaternary structure, homodimer.

It catalyses the reaction XMP + L-glutamine + ATP + H2O = GMP + L-glutamate + AMP + diphosphate + 2 H(+). It participates in purine metabolism; GMP biosynthesis; GMP from XMP (L-Gln route): step 1/1. Its function is as follows. Catalyzes the synthesis of GMP from XMP. The sequence is that of GMP synthase [glutamine-hydrolyzing] from Yersinia enterocolitica serotype O:8 / biotype 1B (strain NCTC 13174 / 8081).